We begin with the raw amino-acid sequence, 304 residues long: Glutaminase (304 aa).

Substrate is bound by residues S63, N114, E158, N165, Y189, Y240, and V258.

The protein belongs to the glutaminase family. Homotetramer.

It carries out the reaction L-glutamine + H2O = L-glutamate + NH4(+). The protein is Glutaminase of Shewanella baltica (strain OS223).